A 679-amino-acid chain; its full sequence is Glycine--tRNA ligase beta subunit (679 aa).

It belongs to the class-II aminoacyl-tRNA synthetase family. In terms of assembly, tetramer of two alpha and two beta subunits.

The protein resides in the cytoplasm. The enzyme catalyses tRNA(Gly) + glycine + ATP = glycyl-tRNA(Gly) + AMP + diphosphate. In Streptococcus pyogenes serotype M2 (strain MGAS10270), this protein is Glycine--tRNA ligase beta subunit.